We begin with the raw amino-acid sequence, 322 residues long: 4-hydroxy-3-methylbut-2-enyl diphosphate reductase (322 aa).

Residue cysteine 15 participates in [4Fe-4S] cluster binding. (2E)-4-hydroxy-3-methylbut-2-enyl diphosphate contacts are provided by histidine 44 and histidine 77. Residues histidine 44 and histidine 77 each coordinate dimethylallyl diphosphate. Residues histidine 44 and histidine 77 each contribute to the isopentenyl diphosphate site. Cysteine 99 contacts [4Fe-4S] cluster. (2E)-4-hydroxy-3-methylbut-2-enyl diphosphate is bound at residue histidine 127. Histidine 127 contributes to the dimethylallyl diphosphate binding site. Histidine 127 provides a ligand contact to isopentenyl diphosphate. Glutamate 129 functions as the Proton donor in the catalytic mechanism. Threonine 168 serves as a coordination point for (2E)-4-hydroxy-3-methylbut-2-enyl diphosphate. Position 198 (cysteine 198) interacts with [4Fe-4S] cluster. Positions 226, 227, 228, and 270 each coordinate (2E)-4-hydroxy-3-methylbut-2-enyl diphosphate. Dimethylallyl diphosphate is bound by residues serine 226, serine 227, asparagine 228, and serine 270. Serine 226, serine 227, asparagine 228, and serine 270 together coordinate isopentenyl diphosphate.

This sequence belongs to the IspH family. It depends on [4Fe-4S] cluster as a cofactor.

The enzyme catalyses isopentenyl diphosphate + 2 oxidized [2Fe-2S]-[ferredoxin] + H2O = (2E)-4-hydroxy-3-methylbut-2-enyl diphosphate + 2 reduced [2Fe-2S]-[ferredoxin] + 2 H(+). The catalysed reaction is dimethylallyl diphosphate + 2 oxidized [2Fe-2S]-[ferredoxin] + H2O = (2E)-4-hydroxy-3-methylbut-2-enyl diphosphate + 2 reduced [2Fe-2S]-[ferredoxin] + 2 H(+). The protein operates within isoprenoid biosynthesis; dimethylallyl diphosphate biosynthesis; dimethylallyl diphosphate from (2E)-4-hydroxy-3-methylbutenyl diphosphate: step 1/1. It participates in isoprenoid biosynthesis; isopentenyl diphosphate biosynthesis via DXP pathway; isopentenyl diphosphate from 1-deoxy-D-xylulose 5-phosphate: step 6/6. Catalyzes the conversion of 1-hydroxy-2-methyl-2-(E)-butenyl 4-diphosphate (HMBPP) into a mixture of isopentenyl diphosphate (IPP) and dimethylallyl diphosphate (DMAPP). Acts in the terminal step of the DOXP/MEP pathway for isoprenoid precursor biosynthesis. The protein is 4-hydroxy-3-methylbut-2-enyl diphosphate reductase of Neisseria meningitidis serogroup C (strain 053442).